Consider the following 122-residue polypeptide: Large ribosomal subunit protein uL14 (122 aa).

This sequence belongs to the universal ribosomal protein uL14 family. In terms of assembly, part of the 50S ribosomal subunit. Forms a cluster with proteins L3 and L19. In the 70S ribosome, L14 and L19 interact and together make contacts with the 16S rRNA in bridges B5 and B8.

In terms of biological role, binds to 23S rRNA. Forms part of two intersubunit bridges in the 70S ribosome. In Stutzerimonas stutzeri (strain A1501) (Pseudomonas stutzeri), this protein is Large ribosomal subunit protein uL14.